The primary structure comprises 95 residues: Aspartyl/glutamyl-tRNA(Asn/Gln) amidotransferase subunit C (95 aa).

The protein belongs to the GatC family. Heterotrimer of A, B and C subunits.

It carries out the reaction L-glutamyl-tRNA(Gln) + L-glutamine + ATP + H2O = L-glutaminyl-tRNA(Gln) + L-glutamate + ADP + phosphate + H(+). It catalyses the reaction L-aspartyl-tRNA(Asn) + L-glutamine + ATP + H2O = L-asparaginyl-tRNA(Asn) + L-glutamate + ADP + phosphate + 2 H(+). In terms of biological role, allows the formation of correctly charged Asn-tRNA(Asn) or Gln-tRNA(Gln) through the transamidation of misacylated Asp-tRNA(Asn) or Glu-tRNA(Gln) in organisms which lack either or both of asparaginyl-tRNA or glutaminyl-tRNA synthetases. The reaction takes place in the presence of glutamine and ATP through an activated phospho-Asp-tRNA(Asn) or phospho-Glu-tRNA(Gln). The sequence is that of Aspartyl/glutamyl-tRNA(Asn/Gln) amidotransferase subunit C from Nitrosomonas europaea (strain ATCC 19718 / CIP 103999 / KCTC 2705 / NBRC 14298).